The following is a 166-amino-acid chain: Flagellar assembly factor FliW (166 aa).

It belongs to the FliW family. Interacts with translational regulator CsrA and flagellin(s).

The protein localises to the cytoplasm. In terms of biological role, acts as an anti-CsrA protein, binds CsrA and prevents it from repressing translation of its target genes, one of which is flagellin. Binds to flagellin and participates in the assembly of the flagellum. The sequence is that of Flagellar assembly factor FliW from Desulfovibrio desulfuricans (strain ATCC 27774 / DSM 6949 / MB).